The chain runs to 201 residues: Ras-related protein Rab-1C (201 aa).

A disordered region spans residues 1–20 (MGCSPSKEGNGSFSSTSTSF). Glycine 2 is lipidated: N-myristoyl glycine. Cysteine 3 is lipidated: S-palmitoyl cysteine. Residues 40-48 (GDSGVGKSC), 58-65 (FTDSYIST), 88-92 (DTAGQ), 146-149 (NKCD), and 176-178 (SAK) contribute to the GTP site. The Effector region motif lies at 62 to 70 (YISTIGVDF).

Belongs to the small GTPase superfamily. Rab family. Post-translationally, although this sequence lacks the C-terminal cysteine motifs subject to isoprenylation in other Rab proteins, it does have N-terminal myristoylation and S-palmitoylation sequence motifs.

This Dictyostelium discoideum (Social amoeba) protein is Ras-related protein Rab-1C (Rab1C).